The following is a 146-amino-acid chain: Protein ADM2 (146 aa).

Residues Met-1 to Ser-25 form the signal peptide. Positions Gly-26 to Ser-96 are excised as a propeptide. The segment at Gly-29–Pro-99 is disordered. Cys-108 and Cys-113 are oxidised to a cystine. At Tyr-145 the chain carries Tyrosine amide.

Belongs to the adrenomedullin family. Expression was restricted to the intermediate and anterior lobes of the pituitary.

It localises to the secreted. In terms of biological role, intermedin/ADM2 is a peptide hormone that plays a role as physiological regulator of gastrointestinal and cardiovascular bioactivities mediated by the CALCRL-RAMPs receptor complexes. Activates the cAMP-dependent pathway through interaction with CALCRL-RAMP3 receptor complex. The polypeptide is Protein ADM2 (Rattus norvegicus (Rat)).